The following is a 600-amino-acid chain: Elongation factor 4 (600 aa).

Residues 4-187 (KYIRNFSIVA…AIIEQIPPPL (184 aa)) form the tr-type G domain. GTP-binding positions include 16–21 (DHGKST) and 134–137 (NKID).

This sequence belongs to the TRAFAC class translation factor GTPase superfamily. Classic translation factor GTPase family. LepA subfamily.

The protein resides in the cell membrane. It carries out the reaction GTP + H2O = GDP + phosphate + H(+). Required for accurate and efficient protein synthesis under certain stress conditions. May act as a fidelity factor of the translation reaction, by catalyzing a one-codon backward translocation of tRNAs on improperly translocated ribosomes. Back-translocation proceeds from a post-translocation (POST) complex to a pre-translocation (PRE) complex, thus giving elongation factor G a second chance to translocate the tRNAs correctly. Binds to ribosomes in a GTP-dependent manner. This Malacoplasma penetrans (strain HF-2) (Mycoplasma penetrans) protein is Elongation factor 4.